The following is a 698-amino-acid chain: MSDPSLYINRELSWLHFNRRVLDEAIRQDQHPLIERVKFIAIFSSNLDEFFMIRVAGIEKQVEAGIRKKTIDGLTPSEQLERIRAEVIEQLKLRNTCLYGDILPALAAEGITFVHFADLPEKEQAVLNAWFRKEIYPVLTPLAFDTGHPFPFMSNLSLNLAIELDEVEHGNLKFARVKVPSVLPRLLKLNDIEGLGNDPSCMRFLWIEELIQQNLGLLFPTMKIVQSHQFRIIRNADIEIEEDEAGDLLQTIEKGVRSRRYGNVVRLDISPEMPDFVRQLLINNLEIEEKNVYEIDGALGMSCLMELLDIDRPSLKDEPFIPFNMFEEQRNGDIFSAISSGDLLFYHPYDSFKPVVDFIDRAASDPDVLSIKQTLYRVGSNSPIVKALMKAAESGKQVAVLVELKARFDEENNIGWARALEDVGAHVIYGLPGLKTHAKLTLVVRREPQGLKRYLHLGTGNYNPSTGKLYTDYSFFTDDELLAGEVSELFNALTGYFRYTGYRFLLVSPINTRKRIIEMIEREIALARKSSGGRIIMKMNSLVDPATIQALYRASRAGVQIDLVVRGICCLKPGIPGVSENIRVISIIGRYLEHSRAYYFANGGSPELYLGSADIMPRNLDDRVETLFPVFDPSLVERVRNDLELQLSDNLKAWKIGPDGNWTLVRNDAPKVNSQERFMKRRTQKKKTTGIKGRLGLN.

ATP is bound at residue asparagine 46. Residues arginine 377 and arginine 407 each coordinate Mg(2+). The active-site Phosphohistidine intermediate is the histidine 437. Residues tyrosine 470, arginine 566, and histidine 594 each contribute to the ATP site.

The protein belongs to the polyphosphate kinase 1 (PPK1) family. It depends on Mg(2+) as a cofactor. In terms of processing, an intermediate of this reaction is the autophosphorylated ppk in which a phosphate is covalently linked to a histidine residue through a N-P bond.

The enzyme catalyses [phosphate](n) + ATP = [phosphate](n+1) + ADP. Functionally, catalyzes the reversible transfer of the terminal phosphate of ATP to form a long-chain polyphosphate (polyP). The protein is Polyphosphate kinase 1 of Chlorobaculum tepidum (strain ATCC 49652 / DSM 12025 / NBRC 103806 / TLS) (Chlorobium tepidum).